The sequence spans 715 residues: Eukaryotic peptide chain release factor GTP-binding subunit (715 aa).

The segment covering 1–12 has biased composition (polar residues); that stretch reads MANASLNGDQSK. Disordered stretches follow at residues 1–148 and 168–262; these read MANA…SLNK and ATKK…SNSA. The segment at 5-128 is several sort of repeats; the sequence is SLNGDQSKQQ…PQQQQQQQSQ (124 aa). Residues 13–25 are compositionally biased toward low complexity; that stretch reads QQQQQQQQQQQQQ. Residues 26–37 are compositionally biased toward polar residues; it reads NYYNPNAAQSFV. 2 stretches are compositionally biased toward low complexity: residues 39 to 129 and 176 to 198; these read QGGY…QSQG and SKPQ…ASAP. The charged stretch occupies residues 129–285; it reads GMSLADFQKQ…DEIDEEVVKD (157 aa). 2 stretches are compositionally biased toward basic and acidic residues: residues 199 to 208 and 218 to 233; these read QEEKKEEKEA and ETKK…KKEA. A tr-type G domain is found at 290–515; sequence KDHVSIIFMG…YLDNMDTMNR (226 aa). The interval 299–306 is G1; sequence GHVDAGKS. 299–306 is a GTP binding site; the sequence is GHVDAGKS. Residues 355-359 form a G2 region; that stretch reads GKTIE. Phosphothreonine is present on threonine 373. Residues 376–379 form a G3 region; it reads DAPG. GTP-binding positions include 376–380 and 438–441; these read DAPGH and NKMD. The interval 438–441 is G4; that stretch reads NKMD. The G5 stretch occupies residues 479 to 481; it reads SGY.

The protein belongs to the TRAFAC class translation factor GTPase superfamily. Classic translation factor GTPase family. ERF3 subfamily.

Its subcellular location is the cytoplasm. In terms of biological role, involved in translation termination. Stimulates the activity of ERF1. Binds guanine nucleotides. The protein is Eukaryotic peptide chain release factor GTP-binding subunit (SUP35) of Candida albicans (Yeast).